A 645-amino-acid polypeptide reads, in one-letter code: Cell pattern formation-associated protein stuA (645 aa).

The segment at 1–52 (MNQMQPYADVHQPHMSTAAHAPASGPPAGLSHYSYPHQPSMMQPQQQQHQYG) is disordered. The span at 18 to 52 (AAHAPASGPPAGLSHYSYPHQPSMMQPQQQQHQYG) shows a compositional bias: low complexity. Residues 124 to 230 (RVTATLWEDE…HDIGALLYHP (107 aa)) form the HTH APSES-type domain. A DNA-binding region (H-T-H motif) is located at residues 158-179 (GTKLLNVAGMTRGRRDGILKSE). Positions 246–645 (VDRNRRPDSM…HTLAAQRARR (400 aa)) are disordered. Composition is skewed to polar residues over residues 254-271 (SMQTQQRYMAGPTTSQAP) and 279-288 (MTNSVGSAMS). Over residues 317–330 (SASSMMGMGNQGSS) the composition is skewed to low complexity. Positions 336 to 365 (ANVQQHPQGNQPLSIDTGLSNARSVPTTPA) are enriched in polar residues. Low complexity predominate over residues 469-481 (PYNGNRGPYGYNP). Polar residues-rich tracts occupy residues 502–542 (SPHQ…NLYN) and 569–584 (YASQGYAPTNGVNSSG). The segment at 585 to 613 (KRGRDEEDAETYRPDSVQGDDMGGLKRRK) is nuclear localization domain. The span at 586-597 (RGRDEEDAETYR) shows a compositional bias: basic and acidic residues.

The protein belongs to the EFG1/PHD1/stuA family.

It localises to the nucleus. In terms of biological role, transcription factor that regulates asexual reproduction. Binds the StuA-response elements (StRE) with the consensus sequence 5'-(A/T)CGCG(T/A)N(A/C)-3' at the promoters of target genes. Regulates the expression of several effector genes (AvrLm1, AvrLm6 and AvrLm4-7) during infection stage. This is Cell pattern formation-associated protein stuA from Leptosphaeria maculans (strain JN3 / isolate v23.1.3 / race Av1-4-5-6-7-8) (Blackleg fungus).